A 306-amino-acid chain; its full sequence is NADH-cytochrome b5 reductase 2-B (306 aa).

The helical transmembrane segment at 12 to 32 (PLLLSSGIAVTAAAAVYFSTG) threads the bilayer. Positions 53 to 157 (STWVDLPLVK…TGPIVKYEWK (105 aa)) constitute an FAD-binding FR-type domain. 160–195 (KFDSVTLLGAGSGITPLYQLMGSILSNPEDKTKINL) contacts FAD.

This sequence belongs to the flavoprotein pyridine nucleotide cytochrome reductase family. FAD serves as cofactor.

Its subcellular location is the mitochondrion outer membrane. It catalyses the reaction 2 Fe(III)-[cytochrome b5] + NADH = 2 Fe(II)-[cytochrome b5] + NAD(+) + H(+). May mediate the reduction of outer membrane cytochrome b5. The polypeptide is NADH-cytochrome b5 reductase 2-B (MCR1B) (Vanderwaltozyma polyspora (strain ATCC 22028 / DSM 70294 / BCRC 21397 / CBS 2163 / NBRC 10782 / NRRL Y-8283 / UCD 57-17) (Kluyveromyces polysporus)).